The following is a 481-amino-acid chain: MADKITSRQEDYSQWYIDLVRSAKLADYSDVRGCMVIRPNGYAIWEKMQAALDGMFKQTGHVNAYFPMFIPESFIAKEAEHIEGFAPECAVVTHGGGEELAEKLYVRPTSETIIWSSYKKWIQSYRDLPILINQWANVVRWEMRTRLFLRTTEFLWQEGHTAHATPEEAQEEVIRMINIYRTFAEEYMAMPVIVGKKSESEKFAGADATYCIEAMMQDGKALQAGTSHNLGQNFAKAFDCQFQTKDGVLDYVWATSWGVSTRLIGALIMAHSDDKGLVLPPKLASRQVVIIPILKGNKDEVRARARFIAKTLNRHGIPTFVDDSENNSPGWKFAEYELQGIPVRIELGPRDLEQGKCIVARRDTFEKTELLLDDELTINIEEILNNIQQNLYDRALQFRLDNTVEATTWEEFKASVEKGFVIAHWDGTHETEALIKEETKATIRVIPTDEEYRQQYNMDEPGTCIRSGKPAAQKVVFAKAY.

It belongs to the class-II aminoacyl-tRNA synthetase family. ProS type 3 subfamily. In terms of assembly, homodimer.

The protein localises to the cytoplasm. It carries out the reaction tRNA(Pro) + L-proline + ATP = L-prolyl-tRNA(Pro) + AMP + diphosphate. In terms of biological role, catalyzes the attachment of proline to tRNA(Pro) in a two-step reaction: proline is first activated by ATP to form Pro-AMP and then transferred to the acceptor end of tRNA(Pro). This Chlorobaculum tepidum (strain ATCC 49652 / DSM 12025 / NBRC 103806 / TLS) (Chlorobium tepidum) protein is Proline--tRNA ligase.